The chain runs to 286 residues: Haloalkane dehalogenase 2 (286 aa).

One can recognise an AB hydrolase-1 domain in the interval 35-134 (PPILLCHGNP…RVRGVVLGNT (100 aa)). Aspartate 109 (nucleophile) is an active-site residue. Aspartate 238 serves as the catalytic Proton donor. Histidine 267 acts as the Proton acceptor in catalysis.

This sequence belongs to the haloalkane dehalogenase family. Type 1 subfamily. In terms of assembly, monomer.

It carries out the reaction 1-haloalkane + H2O = a halide anion + a primary alcohol + H(+). In terms of biological role, catalyzes hydrolytic cleavage of carbon-halogen bonds in halogenated aliphatic compounds, leading to the formation of the corresponding primary alcohols, halide ions and protons. The sequence is that of Haloalkane dehalogenase 2 (dhmA2) from Mycobacterium bovis (strain ATCC BAA-935 / AF2122/97).